A 114-amino-acid polypeptide reads, in one-letter code: Replication initiation control protein YabA (114 aa).

Positions 79, 81, 95, and 98 each coordinate Zn(2+).

This sequence belongs to the YabA family. In terms of assembly, homotetramer. Interacts with both DnaA and DnaN, acting as a bridge between these two proteins. Zn(2+) is required as a cofactor.

The protein resides in the cytoplasm. It localises to the nucleoid. Functionally, involved in control of chromosome replication initiation. Inhibits the cooperative binding of DnaA to the oriC region, thus negatively regulating initiation of chromosome replication. Inhibits the ability of DnaA-ATP to form a helix on DNA; does not disassemble preformed DnaA-DNA helices. Decreases the residence time of DnaA on the chromosome at its binding sites (oriC, replication forks and promoter-binding sites). Tethers DnaA to the replication machinery via the DNA polymerase beta sliding clamp subunit (dnaN). Associates with oriC and other DnaA targets on the chromosome in a DnaA-dependent manner. This is Replication initiation control protein YabA from Lactobacillus johnsonii (strain CNCM I-12250 / La1 / NCC 533).